The sequence spans 130 residues: Small ribosomal subunit protein bS6 (130 aa).

A disordered region spans residues serine 100–glutamate 130. Residues lysine 104–phenylalanine 116 show a composition bias toward basic and acidic residues. Positions alanine 117 to glutamate 130 are enriched in acidic residues.

It belongs to the bacterial ribosomal protein bS6 family.

Binds together with bS18 to 16S ribosomal RNA. The sequence is that of Small ribosomal subunit protein bS6 from Pectobacterium atrosepticum (strain SCRI 1043 / ATCC BAA-672) (Erwinia carotovora subsp. atroseptica).